Reading from the N-terminus, the 89-residue chain is MNKNEKMVRSLMGTVVSNKMNDTVVVRVERRVKHPKYGKFIKRSTKIHAHDKGNEGQIGDIVTIRECRPISKTKSWTLVKINERAEKVE.

This sequence belongs to the universal ribosomal protein uS17 family. Part of the 30S ribosomal subunit.

Its function is as follows. One of the primary rRNA binding proteins, it binds specifically to the 5'-end of 16S ribosomal RNA. The chain is Small ribosomal subunit protein uS17 from Coxiella burnetii (strain RSA 493 / Nine Mile phase I).